Here is a 603-residue protein sequence, read N- to C-terminus: Terpenoid synthase 22 (603 aa).

The Mg(2+) site is built by Asp-356, Asp-360, Asn-500, and Glu-508. The DDXXD motif motif lies at 356–360 (DDTCD).

It belongs to the terpene synthase family. Tpsa subfamily. Mg(2+) is required as a cofactor. The cofactor is Mn(2+). Predominantly expressed in siliques but also in flowers.

The protein resides in the cytoplasm. The protein operates within secondary metabolite biosynthesis; terpenoid biosynthesis. In terms of biological role, involved in terpene biosynthesis in roots. Possesses sesquiterpene (C15) synthase activity in vitro. Does not seem to be involved in diterpene (C20) biosynthesis. The sequence is that of Terpenoid synthase 22 from Arabidopsis thaliana (Mouse-ear cress).